The chain runs to 1126 residues: Translation initiation factor IF-2 (1126 aa).

Positions 63–519 (LSINKPSIKK…TTRQRQKRRA (457 aa)) are disordered. Positions 70-83 (IKKDNFKQNKEDKS) are enriched in basic and acidic residues. A compositionally biased stretch (low complexity) spans 93 to 111 (PLKNNSNKKPLLIKPLNKP). A compositionally biased stretch (polar residues) spans 116 to 151 (KISNQLQNPNKPNIVNSSQSRANLTNTNSKPSQNFN). Over residues 161 to 171 (TPPPIKSPAKP) the composition is skewed to pro residues. A compositionally biased stretch (polar residues) spans 181–195 (NINNNVKSSESSQNI). Low complexity-rich tracts occupy residues 211 to 224 (NTNKPKTKNFNNRK) and 240 to 252 (IINPNKQNNNKQN). The segment covering 254–264 (AFKQTASNRPG) has biased composition (polar residues). 2 stretches are compositionally biased toward low complexity: residues 291-315 (NRQGNPNRPGSPNRPGMPNRPGLRN) and 327-349 (NRQGNPNRPGSPNGPGMPNNRPG). Positions 429–443 (GKTDWDDSAKLEALR) are enriched in basic and acidic residues. Over residues 501–517 (KQFKKKKKETTRQRQKR) the composition is skewed to basic residues. Residues 618 to 790 (RRPPVITVMG…ILLVSDVEDL (173 aa)) enclose the tr-type G domain. Positions 627–634 (GHVDHGKT) are G1. 627–634 (GHVDHGKT) contacts GTP. The tract at residues 652-656 (GITQH) is G2. A G3 region spans residues 677–680 (DTPG). GTP-binding positions include 677–681 (DTPGH) and 731–734 (NKID). Positions 731–734 (NKID) are G4. Residues 767–769 (SAI) form a G5 region.

It belongs to the TRAFAC class translation factor GTPase superfamily. Classic translation factor GTPase family. IF-2 subfamily.

It localises to the cytoplasm. Functionally, one of the essential components for the initiation of protein synthesis. Protects formylmethionyl-tRNA from spontaneous hydrolysis and promotes its binding to the 30S ribosomal subunits. Also involved in the hydrolysis of GTP during the formation of the 70S ribosomal complex. This chain is Translation initiation factor IF-2, found in Prochlorococcus marinus (strain AS9601).